Consider the following 301-residue polypeptide: Pantothenate synthetase (301 aa).

30 to 37 serves as a coordination point for ATP; it reads MGNLHEGH. The Proton donor role is filled by H37. Q61 contacts (R)-pantoate. Q61 serves as a coordination point for beta-alanine. ATP is bound at residue 149 to 152; that stretch reads GEKD. (R)-pantoate is bound at residue Q155. Residues V178 and 186–189 contribute to the ATP site; that span reads MSSR.

Belongs to the pantothenate synthetase family. In terms of assembly, homodimer.

It is found in the cytoplasm. The enzyme catalyses (R)-pantoate + beta-alanine + ATP = (R)-pantothenate + AMP + diphosphate + H(+). It participates in cofactor biosynthesis; (R)-pantothenate biosynthesis; (R)-pantothenate from (R)-pantoate and beta-alanine: step 1/1. In terms of biological role, catalyzes the condensation of pantoate with beta-alanine in an ATP-dependent reaction via a pantoyl-adenylate intermediate. This chain is Pantothenate synthetase, found in Vibrio vulnificus (strain CMCP6).